Here is a 78-residue protein sequence, read N- to C-terminus: Large ribosomal subunit protein bL28 (78 aa).

Positions 1 to 21 (MSRVCQVTGKRPVSGNNRSHA) are disordered.

Belongs to the bacterial ribosomal protein bL28 family.

This chain is Large ribosomal subunit protein bL28, found in Sodalis glossinidius (strain morsitans).